The chain runs to 252 residues: Type II secretion system protein N (252 aa).

The Cytoplasmic segment spans residues 1 to 4 (MKQK). The chain crosses the membrane as a helical span at residues 5-25 (VLIAALFLVAYLGFLLVKLPA). The Periplasmic portion of the chain corresponds to 26 to 252 (TLVVRHLPLP…RFPLRYQGRI (227 aa)).

It belongs to the GSP N family.

It is found in the cell inner membrane. In terms of biological role, involved in a type II secretion system (T2SS, formerly general secretion pathway, GSP) for the export of proteins. The polypeptide is Type II secretion system protein N (exeN) (Aeromonas hydrophila).